The primary structure comprises 284 residues: Undecaprenyl-diphosphatase (284 aa).

8 consecutive transmembrane segments (helical) span residues 7–27 (IILG…TGHL), 44–64 (EMFD…LYFH), 90–110 (LWLK…PLND), 116–136 (FYHF…FIVI), 167–187 (VLSL…ALLI), 197–217 (FTFF…ILHF), 229–249 (FGVL…AIKF), and 259–279 (FTFF…YAAF).

This sequence belongs to the UppP family.

It is found in the cell membrane. It carries out the reaction di-trans,octa-cis-undecaprenyl diphosphate + H2O = di-trans,octa-cis-undecaprenyl phosphate + phosphate + H(+). Functionally, catalyzes the dephosphorylation of undecaprenyl diphosphate (UPP). Confers resistance to bacitracin. The polypeptide is Undecaprenyl-diphosphatase (Lactococcus lactis subsp. cremoris (strain SK11)).